Consider the following 342-residue polypeptide: Polyprenyl transferase trt2 (342 aa).

The next 9 helical transmembrane spans lie at 71 to 91 (VVGVAYTAAIAPVSLPATVLL), 95 to 115 (IILSLWGFLIRSGGCAWNDLI), 141 to 161 (AALLTAIIFGCGGLLLLLLPS), 163 to 183 (CTVEAGIILFFALLYPFGKRF), 187 to 207 (PQLILVNIAWAIPMAMSSLEV), 216 to 236 (TLSMCIFIASVIVMIDVVYAC), 261 to 278 (LAYGFFFSGAISLLLGGV), 282 to 304 (LGLPFIVFSVGGHIFGFLRFLSV), and 319 to 339 (AKSSCLLATVFWVLGFFLEYL).

It belongs to the UbiA prenyltransferase family. The cofactor is Mg(2+).

Its subcellular location is the membrane. The catalysed reaction is 3,5-dimethylorsellinate + (2E,6E)-farnesyl diphosphate = (3R)-3-farnesyl-6-hydroxy-2,3,5-trimethyl-4-oxocyclohexa-1,5-diene-1-carboxylate + diphosphate + H(+). It functions in the pathway secondary metabolite biosynthesis; terpenoid biosynthesis. In terms of biological role, polyprenyl transferase; part of the gene cluster that mediates the biosynthesis of terretonin, a fungal meroterpenoid that acts as a mycotoxin. The first step of the pathway is the synthesis of 3,5-dimethylorsellinic acid (DMOA) by the polyketide synthase trt4. DMOA is then prenylated into farnesyl-DMOA by the polyprenyl transferase trt2. Methylation by the methyltransferase trt5 then leads to farnesyl-DMOA methyl ester which is further subject to epoxidation by the FAD-dependent monooxygenase trt8 to yield epoxyfarnesyl-DMOA methyl ester. Cyclization of epoxyfarnesyl-DMOA methyl ester by the terpene cyclase trt1 leads to a tetracycle intermediate which is in turn converted to preterretonin. Dehydrogenase trt9 comes next to transform preterretonin to preterrenoid. The FAD-dependent monooxygenase trt3 is then required for the C-hydroxylation at C16 of preterrenoid to yield terrenoid. The cytochrome P450 trt6 catalyzes three successive oxidations to transform terrenoid into an unstable intermediate, which then undergoes the D-ring expansion and unusual rearrangement of the methoxy group to afford the core skeleton of terretonin. Trt14 catalyzes the D-ring expansion of terretonin involving intramolecular methoxy rearrangement as well as the hydrolysis of the expanded D-ring and the methyl ester moiety. Finally, the nonheme iron-dependent dioxygenase trt7 accomplishes the last two oxidation reactions steps to complete the biosynthesis of terretonin. Terretonin C is produced via spontaneous decarboxylation of the terretonin precursor. Another shunt product of the terretonin biosynthesis is dihydrofarnesyl-DMOA, derived from epoxyfarnesyl-DMOA through hydrolysis of the epoxide. The chain is Polyprenyl transferase trt2 from Aspergillus terreus (strain NIH 2624 / FGSC A1156).